We begin with the raw amino-acid sequence, 734 residues long: Photosystem I P700 chlorophyll a apoprotein A2 (734 aa).

Transmembrane regions (helical) follow at residues 46-69 (IFAS…FHVA), 135-158 (LYGG…LHLQ), 175-199 (LNHH…HVAI), 273-291 (MAHH…GHMY), 330-353 (LHFQ…QHMY), 369-395 (AALY…IFFI), 417-439 (AIIS…LYVH), and 517-535 (FLVH…LILV). Cysteine 559 and cysteine 568 together coordinate [4Fe-4S] cluster. Transmembrane regions (helical) follow at residues 575 to 596 (AFYL…YWHW) and 643 to 665 (LSVW…MFLI). Chlorophyll a-binding residues include histidine 654, methionine 662, and tyrosine 670. Tryptophan 671 is a phylloquinone binding site. The chain crosses the membrane as a helical span at residues 707 to 727 (LVGLAHFSVGYIFTYAAFLIA).

Belongs to the PsaA/PsaB family. The PsaA/B heterodimer binds the P700 chlorophyll special pair and subsequent electron acceptors. PSI consists of a core antenna complex that captures photons, and an electron transfer chain that converts photonic excitation into a charge separation. The eukaryotic PSI reaction center is composed of at least 11 subunits. P700 is a chlorophyll a/chlorophyll a' dimer, A0 is one or more chlorophyll a, A1 is one or both phylloquinones and FX is a shared 4Fe-4S iron-sulfur center. serves as cofactor.

The protein resides in the plastid. The protein localises to the chloroplast thylakoid membrane. The catalysed reaction is reduced [plastocyanin] + hnu + oxidized [2Fe-2S]-[ferredoxin] = oxidized [plastocyanin] + reduced [2Fe-2S]-[ferredoxin]. PsaA and PsaB bind P700, the primary electron donor of photosystem I (PSI), as well as the electron acceptors A0, A1 and FX. PSI is a plastocyanin-ferredoxin oxidoreductase, converting photonic excitation into a charge separation, which transfers an electron from the donor P700 chlorophyll pair to the spectroscopically characterized acceptors A0, A1, FX, FA and FB in turn. Oxidized P700 is reduced on the lumenal side of the thylakoid membrane by plastocyanin. The chain is Photosystem I P700 chlorophyll a apoprotein A2 from Physcomitrium patens (Spreading-leaved earth moss).